We begin with the raw amino-acid sequence, 523 residues long: Metalloendopeptidase OMA1, mitochondrial (523 aa).

The transit peptide at 1–45 (MSFIYGLQSAARNCFFFRFNLLTNWRKCNTQAVTSRDFHQVKINH) directs the protein to the mitochondrion. A propeptide spanning residues 46-143 (IVNKSLGLGV…RSFHTSPRCQ (98 aa)) is cleaved from the precursor. Topologically, residues 144-195 (AAPAPLLLMILKPAQKLLAIIVGRGIRKWWQALPPNKKELFKESLRKNKWKL) are mitochondrial matrix. The tract at residues 148–167 (PLLLMILKPAQKLLAIIVGR) is cardiolipin-binding. The stress-sensor region stretch occupies residues 165 to 195 (VGRGIRKWWQALPPNKKELFKESLRKNKWKL). The chain crosses the membrane as a helical span at residues 196 to 216 (FLGLSSFGLLFVVFYFTHLEV). Residue histidine 327 coordinates Zn(2+). Glutamate 328 is a catalytic residue. Zn(2+)-binding residues include histidine 331 and glutamate 392. Cysteine 407 and cysteine 465 form a disulfide bridge.

Belongs to the peptidase M48 family. In terms of assembly, homooligomer. Zn(2+) serves as cofactor. Post-translationally, autocatalytically cleaved in response to mitochondrial depolarization both at the N-terminus and C-terminus to generate the short active form (S-OMA1). Autocatalytic processing at the C-terminus takes place at residues 447-456. The S-OMA1 form is unstable. OMA1 pre-processing by AFG3L2 may participate in maturation before OMA1 autocatalytic cleavage. Degraded by YMEL1 in response to membrane depolarization. Protein turnover is regulated by prohibitin (PHB and PHB2), which promotes degradation of OMA1 in a cardiolipin-binding manner. May form a redox-dependent disulfide bond. Exists in a semi-oxidized state and is activated by prolonged hypoxia.

Its subcellular location is the mitochondrion inner membrane. Protease activity is activated upon autocatalytic cleavage in response to mitochondrial depolarization. Metalloprotease that is part of the quality control system in the inner membrane of mitochondria. Activated in response to various mitochondrial stress, leading to the proteolytic cleavage of target proteins, such as OPA1, UQCC3 and DELE1. Involved in the fusion of the mitochondrial inner membranes by mediating cleavage of OPA1 at S1 position, generating the soluble OPA1 (S-OPA1), which cooperates with the membrane form (L-OPA1) to coordinate the fusion of mitochondrial inner membranes. Following stress conditions that induce loss of mitochondrial membrane potential, mediates cleavage of OPA1, leading to excess production of soluble OPA1 (S-OPA1) and negative regulation of mitochondrial fusion. Involved in mitochondrial safeguard in response to transient mitochondrial membrane depolarization (flickering) by catalyzing cleavage of OPA1, leading to excess production of S-OPA1, preventing mitochondrial hyperfusion. Also acts as a regulator of apoptosis: upon BAK and BAX aggregation, mediates cleavage of OPA1, leading to the remodeling of mitochondrial cristae and allowing the release of cytochrome c from mitochondrial cristae. In depolarized mitochondria, may also act as a backup protease for PINK1 by mediating PINK1 cleavage and promoting its subsequent degradation by the proteasome. May also cleave UQCC3 in response to mitochondrial depolarization. Also acts as an activator of the integrated stress response (ISR): in response to mitochondrial stress, mediates cleavage of DELE1 to generate the processed form of DELE1 (S-DELE1), which translocates to the cytosol and activates EIF2AK1/HRI to trigger the ISR. Its role in mitochondrial quality control is essential for regulating lipid metabolism as well as to maintain body temperature and energy expenditure under cold-stress conditions. Binds cardiolipin, possibly regulating its protein turnover. Required for the stability of the respiratory supercomplexes. This Bos taurus (Bovine) protein is Metalloendopeptidase OMA1, mitochondrial.